The primary structure comprises 593 residues: NADH-quinone oxidoreductase subunit C/D (593 aa).

The interval 1–184 is NADH dehydrogenase I subunit C; the sequence is MTADNALYIP…DPYSLTLAKQ (184 aa). The interval 208 to 593 is NADH dehydrogenase I subunit D; it reads DYMFLNLGPN…IDFVMADVDR (386 aa).

In the N-terminal section; belongs to the complex I 30 kDa subunit family. It in the C-terminal section; belongs to the complex I 49 kDa subunit family. As to quaternary structure, NDH-1 is composed of 13 different subunits. Subunits NuoB, CD, E, F, and G constitute the peripheral sector of the complex.

It localises to the cell inner membrane. It carries out the reaction a quinone + NADH + 5 H(+)(in) = a quinol + NAD(+) + 4 H(+)(out). In terms of biological role, NDH-1 shuttles electrons from NADH, via FMN and iron-sulfur (Fe-S) centers, to quinones in the respiratory chain. The immediate electron acceptor for the enzyme in this species is believed to be ubiquinone. Couples the redox reaction to proton translocation (for every two electrons transferred, four hydrogen ions are translocated across the cytoplasmic membrane), and thus conserves the redox energy in a proton gradient. The polypeptide is NADH-quinone oxidoreductase subunit C/D (Pseudomonas syringae pv. syringae (strain B728a)).